Here is a 121-residue protein sequence, read N- to C-terminus: Immunoglobulin heavy variable 6-1 (121 aa).

Positions 1-20 (MSVSFLIFLPVLGLPWGVLS) are cleaved as a signal peptide. Positions 21 to 45 (QVQLQQSGPGLVKPSQTLSLTCAIS) are framework-1. The Ig-like domain occupies 21–121 (QVQLQQSGPG…EDTAVYYCAR (101 aa)). The cysteines at positions 42 and 119 are disulfide-linked. A complementarity-determining-1 region spans residues 46–55 (GDSVSSNSAA). The framework-2 stretch occupies residues 56–72 (WNWIRQSPSRGLEWLGR). A complementarity-determining-2 region spans residues 73–81 (TYYRSKWYN). The interval 82-119 (DYAVSVKSRITINPDTSKNQFSLQLNSVTPEDTAVYYC) is framework-3. The tract at residues 120-121 (AR) is complementarity-determining-3.

As to quaternary structure, immunoglobulins are composed of two identical heavy chains and two identical light chains; disulfide-linked.

The protein localises to the secreted. It localises to the cell membrane. Functionally, v region of the variable domain of immunoglobulin heavy chains that participates in the antigen recognition. Immunoglobulins, also known as antibodies, are membrane-bound or secreted glycoproteins produced by B lymphocytes. In the recognition phase of humoral immunity, the membrane-bound immunoglobulins serve as receptors which, upon binding of a specific antigen, trigger the clonal expansion and differentiation of B lymphocytes into immunoglobulins-secreting plasma cells. Secreted immunoglobulins mediate the effector phase of humoral immunity, which results in the elimination of bound antigens. The antigen binding site is formed by the variable domain of one heavy chain, together with that of its associated light chain. Thus, each immunoglobulin has two antigen binding sites with remarkable affinity for a particular antigen. The variable domains are assembled by a process called V-(D)-J rearrangement and can then be subjected to somatic hypermutations which, after exposure to antigen and selection, allow affinity maturation for a particular antigen. The protein is Immunoglobulin heavy variable 6-1 of Homo sapiens (Human).